The following is a 95-amino-acid chain: Acylphosphatase (95 aa).

The region spanning 8 to 95 (RVSARITGRV…DAFEGFRVRR (88 aa)) is the Acylphosphatase-like domain. Active-site residues include R23 and N41.

This sequence belongs to the acylphosphatase family.

The catalysed reaction is an acyl phosphate + H2O = a carboxylate + phosphate + H(+). The protein is Acylphosphatase (acyP) of Salinibacter ruber (strain DSM 13855 / M31).